We begin with the raw amino-acid sequence, 1910 residues long: Endoribonuclease dcr-1 (1910 aa).

One can recognise a Helicase ATP-binding domain in the interval Leu20–Glu201. Leu33 to Thr40 serves as a coordination point for ATP. The short motif at Asp145–His148 is the DEAH box element. One can recognise a Helicase C-terminal domain in the interval Glu371–Ser542. Positions Ala571–Lys667 constitute a Dicer dsRNA-binding fold domain. Residues Tyr845 to Pro1003 enclose the PAZ domain. 3 disordered regions span residues Arg951 to Ser988, Thr1227 to Thr1248, and Leu1272 to Phe1309. 2 stretches are compositionally biased toward polar residues: residues Ile970–Ser988 and Thr1227–Lys1245. Positions Lys1245 to Lys1280 form a coiled coil. The span at Leu1272 to Asp1286 shows a compositional bias: basic and acidic residues. Residues Val1288–Asn1304 show a composition bias toward acidic residues. 2 RNase III domains span residues Val1381–Gly1589 and Phe1643–Gly1805. 3 residues coordinate Mg(2+): Glu1682, Asp1791, and Glu1794. Residues Ser1833–Gln1896 enclose the DRBM domain.

This sequence belongs to the helicase family. Dicer subfamily. In terms of assembly, component of the ERI/DICER complex at least composed of dcr-1, rrf-3 and eri-1. Interacts with pir-1. Requires Mg(2+) as cofactor. Mn(2+) is required as a cofactor.

In terms of biological role, component of the ERI/DICER complex which is involved in processing amplified double-stranded RNA (dsRNA) intermediates during small-RNA-mediated gene-silencing or RNA interference (RNAi). Involved in cleaving dsRNA in the RNAi pathway. It produces 21 to 23 bp dsRNAs (siRNAs) which target the selective destruction of homologous RNAs. Seems to process the precursor of the small temporal RNA let-7 which is involved in developmental timing. Required for avoidance behavior induced by small RNAs derived from pathogenic bacteria such as P.aeruginosa. Involved in innate immunity through its role in small RNA processing. Functionally, tDCR-1 acts as a deoxyribonuclease (DNase) initiating DNA fragmentation during apoptosis, upstream of nucleases cps-6, crn-2 and nuc-1. This is Endoribonuclease dcr-1 from Caenorhabditis elegans.